We begin with the raw amino-acid sequence, 248 residues long: Probable aquaporin TIP2-2 (248 aa).

A run of 2 helical transmembrane segments spans residues 21 to 41 (AYVAEFISTLVFVFAGVGSAI) and 55 to 75 (AGLVAVAVCHGFGLFVAVAIG). The NPA 1 motif lies at 84–86 (NPA). A run of 3 helical transmembrane segments spans residues 87–109 (VTFGLALGGQITILTGVFYWIAQ), 133–153 (LSGVGAFEGVVMEIIVTFGLV), and 168–188 (LGTIAPIAIGFIVGANILVAG). Residues 196–198 (NPA) carry the NPA 2 motif. Residues 210–230 (YTNIWIYWVGPLVGGGLAGLV) traverse the membrane as a helical segment.

Belongs to the MIP/aquaporin (TC 1.A.8) family. TIP (TC 1.A.8.10) subfamily. Expressed in roots and leaves.

Its subcellular location is the vacuole membrane. Its function is as follows. Aquaporins facilitate the transport of water and small neutral solutes across cell membranes. May be involved in transport from the vacuolar compartment to the cytoplasm. The polypeptide is Probable aquaporin TIP2-2 (TIP2-2) (Oryza sativa subsp. japonica (Rice)).